The primary structure comprises 204 residues: Ribonuclease HII (204 aa).

Residues 14–203 (VGLCGVDEAG…VRLLLDQTSL (190 aa)) form the RNase H type-2 domain. A divalent metal cation contacts are provided by D20, E21, and D112.

Belongs to the RNase HII family. Requires Mn(2+) as cofactor. Mg(2+) serves as cofactor.

Its subcellular location is the cytoplasm. The enzyme catalyses Endonucleolytic cleavage to 5'-phosphomonoester.. Endonuclease that specifically degrades the RNA of RNA-DNA hybrids. This Thiobacillus denitrificans (strain ATCC 25259 / T1) protein is Ribonuclease HII.